The primary structure comprises 631 residues: RNA polymerase sigma factor RpoD (631 aa).

Residues L395–T465 form a sigma-70 factor domain-2 region. The Interaction with polymerase core subunit RpoC signature appears at D419–Q422. Positions E474–H550 are sigma-70 factor domain-3. The interval I563–N616 is sigma-70 factor domain-4. The segment at residues L589–S608 is a DNA-binding region (H-T-H motif).

Belongs to the sigma-70 factor family. RpoD/SigA subfamily. In terms of assembly, interacts transiently with the RNA polymerase catalytic core.

The protein localises to the cytoplasm. Functionally, sigma factors are initiation factors that promote the attachment of RNA polymerase to specific initiation sites and are then released. This sigma factor is the primary sigma factor during exponential growth. The chain is RNA polymerase sigma factor RpoD from Borreliella burgdorferi (strain ATCC 35210 / DSM 4680 / CIP 102532 / B31) (Borrelia burgdorferi).